The chain runs to 182 residues: dCTP deaminase, dUMP-forming (182 aa).

Residues 96–101 (RSSIGR), Asp-113, 121–123 (TLE), Gln-142, Tyr-156, and Gln-163 contribute to the dCTP site. Residue Glu-123 is the Proton donor/acceptor of the active site.

This sequence belongs to the dCTP deaminase family. As to quaternary structure, homotrimer.

The enzyme catalyses dCTP + 2 H2O = dUMP + NH4(+) + diphosphate. It participates in pyrimidine metabolism; dUMP biosynthesis; dUMP from dCTP: step 1/1. In terms of biological role, bifunctional enzyme that catalyzes both the deamination of dCTP to dUTP and the hydrolysis of dUTP to dUMP without releasing the toxic dUTP intermediate. This Halothermothrix orenii (strain H 168 / OCM 544 / DSM 9562) protein is dCTP deaminase, dUMP-forming.